The sequence spans 739 residues: Phosphoribosylformylglycinamidine synthase subunit PurL (739 aa).

Residue histidine 53 is part of the active site. Residues tyrosine 56 and lysine 95 each contribute to the ATP site. Glutamate 97 lines the Mg(2+) pocket. Residues 98–101 (SHNH) and arginine 120 each bind substrate. The active-site Proton acceptor is the histidine 99. Aspartate 121 is a Mg(2+) binding site. Position 244 (glutamine 244) interacts with substrate. Aspartate 274 lines the Mg(2+) pocket. 318 to 320 (ESQ) provides a ligand contact to substrate. Aspartate 501 and glycine 538 together coordinate ATP. Asparagine 539 lines the Mg(2+) pocket. Serine 541 provides a ligand contact to substrate.

It belongs to the FGAMS family. In terms of assembly, monomer. Part of the FGAM synthase complex composed of 1 PurL, 1 PurQ and 2 PurS subunits.

The protein localises to the cytoplasm. The catalysed reaction is N(2)-formyl-N(1)-(5-phospho-beta-D-ribosyl)glycinamide + L-glutamine + ATP + H2O = 2-formamido-N(1)-(5-O-phospho-beta-D-ribosyl)acetamidine + L-glutamate + ADP + phosphate + H(+). Its pathway is purine metabolism; IMP biosynthesis via de novo pathway; 5-amino-1-(5-phospho-D-ribosyl)imidazole from N(2)-formyl-N(1)-(5-phospho-D-ribosyl)glycinamide: step 1/2. Its function is as follows. Part of the phosphoribosylformylglycinamidine synthase complex involved in the purines biosynthetic pathway. Catalyzes the ATP-dependent conversion of formylglycinamide ribonucleotide (FGAR) and glutamine to yield formylglycinamidine ribonucleotide (FGAM) and glutamate. The FGAM synthase complex is composed of three subunits. PurQ produces an ammonia molecule by converting glutamine to glutamate. PurL transfers the ammonia molecule to FGAR to form FGAM in an ATP-dependent manner. PurS interacts with PurQ and PurL and is thought to assist in the transfer of the ammonia molecule from PurQ to PurL. This Listeria innocua serovar 6a (strain ATCC BAA-680 / CLIP 11262) protein is Phosphoribosylformylglycinamidine synthase subunit PurL.